The sequence spans 636 residues: Probable potassium transport system protein Kup (636 aa).

12 helical membrane-spanning segments follow: residues 22-42, 64-84, 114-134, 150-170, 182-202, 220-240, 261-281, 293-313, 351-371, 383-403, 408-428, and 433-453; these read MGLL…SPLY, ILSL…VMFI, ALMV…SMIT, FEGI…ALFL, LFGP…VHGI, FFIV…LALT, WFAL…AILL, LLAP…ATVI, IYIG…VIGF, VAVT…MLLL, PVLA…FFAA, and IVQG…LMST.

The protein belongs to the HAK/KUP transporter (TC 2.A.72) family.

It localises to the cell inner membrane. It carries out the reaction K(+)(in) + H(+)(in) = K(+)(out) + H(+)(out). Functionally, transport of potassium into the cell. Likely operates as a K(+):H(+) symporter. This is Probable potassium transport system protein Kup from Pseudomonas entomophila (strain L48).